A 339-amino-acid polypeptide reads, in one-letter code: Trace amine-associated receptor 2 (339 aa).

Residues 1–36 (MASFEAQQETFDCSEYGNGSCPENERSLGVRAAMYS) are Extracellular-facing. N-linked (GlcNAc...) asparagine glycosylation is present at N18. 2 disulfide bridges follow: C21–C185 and C104–C189. Residues 37–57 (LMACAIFITIFGNLAMIISIS) form a helical membrane-spanning segment. Residues 58–67 (YFKQLHTPTN) are Cytoplasmic-facing. The chain crosses the membrane as a helical span at residues 68 to 88 (LLILSMAVTDFLLGFTIMPYS). The Extracellular segment spans residues 89 to 106 (MVRSVENCWYFGLTFCKI). A helical transmembrane segment spans residues 107–127 (HYSFDLMLSITSIFHLCSVAV). Over 128–150 (DRFYAICHPLHYCTKMTIPVVRR) the chain is Cytoplasmic. Residues 151–171 (LLLVCWSVPGAFAFGVVFSEA) form a helical membrane-spanning segment. Residues 172 to 195 (YADGIEGYDILVACSSSCPVMFNK) lie on the Extracellular side of the membrane. The helical transmembrane segment at 196–216 (LWGTTLFVAGFFTPSSMMVGI) threads the bilayer. Residues 217-251 (YGKIFAVSKKHARVIDNLPENQNNQMRKDKKAAKT) lie on the Cytoplasmic side of the membrane. A helical membrane pass occupies residues 252-272 (LGIVMGVFLLCWFPCFFTILL). Residues 273-287 (DPFLNFSTPAVLFDA) lie on the Extracellular side of the membrane. An N-linked (GlcNAc...) asparagine glycan is attached at N277. A helical transmembrane segment spans residues 288–310 (LTWFGYFNSTCNPLIYGFFYPWF). Residues 311–339 (RRALKYILLGKIFSSHFHNTNLFTQKETE) lie on the Cytoplasmic side of the membrane.

It belongs to the G-protein coupled receptor 1 family. In terms of tissue distribution, mainly expressed in neurons of the olfactory epithelium. Also present in the limbic brain areas receiving projection from the olfactory system and several brain regions, including the hippocampus, cerebellum, cortex, raphe nuclei, hypothalamus and habenula.

It localises to the cell membrane. In terms of biological role, orphan olfactory receptor specific for trace amines. Trace amine compounds are enriched in animal body fluids and act on trace amine-associated receptors (TAARs) to elicit both intraspecific and interspecific innate behaviors. Ligand-binding causes a conformation change that triggers signaling via the G(s)-class of G-proteins which activate adenylate cyclase. May also be required to provide olfactory input into limbic brain areas to regulate emotional behaviors likely via modulation of the dopamine system. This is Trace amine-associated receptor 2 from Mus musculus (Mouse).